Reading from the N-terminus, the 557-residue chain is Dihydroxy-acid dehydratase (557 aa).

Cys-50 provides a ligand contact to [2Fe-2S] cluster. Asp-82 contributes to the Mg(2+) binding site. Cys-123 lines the [2Fe-2S] cluster pocket. Mg(2+)-binding residues include Asp-124 and Lys-125. Lys-125 is subject to N6-carboxylysine. Cys-195 is a binding site for [2Fe-2S] cluster. Glu-447 is a binding site for Mg(2+). The active-site Proton acceptor is the Ser-473.

The protein belongs to the IlvD/Edd family. As to quaternary structure, homodimer. [2Fe-2S] cluster serves as cofactor. Mg(2+) is required as a cofactor.

The enzyme catalyses (2R)-2,3-dihydroxy-3-methylbutanoate = 3-methyl-2-oxobutanoate + H2O. The catalysed reaction is (2R,3R)-2,3-dihydroxy-3-methylpentanoate = (S)-3-methyl-2-oxopentanoate + H2O. Its pathway is amino-acid biosynthesis; L-isoleucine biosynthesis; L-isoleucine from 2-oxobutanoate: step 3/4. The protein operates within amino-acid biosynthesis; L-valine biosynthesis; L-valine from pyruvate: step 3/4. In terms of biological role, functions in the biosynthesis of branched-chain amino acids. Catalyzes the dehydration of (2R,3R)-2,3-dihydroxy-3-methylpentanoate (2,3-dihydroxy-3-methylvalerate) into 2-oxo-3-methylpentanoate (2-oxo-3-methylvalerate) and of (2R)-2,3-dihydroxy-3-methylbutanoate (2,3-dihydroxyisovalerate) into 2-oxo-3-methylbutanoate (2-oxoisovalerate), the penultimate precursor to L-isoleucine and L-valine, respectively. The polypeptide is Dihydroxy-acid dehydratase (Burkholderia pseudomallei (strain 1710b)).